Here is a 473-residue protein sequence, read N- to C-terminus: Cephalotoxin-like protein (473 aa).

Positions 1 to 21 are cleaved as a signal peptide; the sequence is RWLGWQKFCWISCLFSSISSG. Coiled coils occupy residues 40–60 and 116–147; these read AINA…EALK and LINE…ADTA.

As to expression, component of the acid-insoluble and acid-soluble organic matrix of the aragonitic skeleton (at protein level).

The protein resides in the secreted. The polypeptide is Cephalotoxin-like protein (Acropora millepora (Staghorn coral)).